Here is a 389-residue protein sequence, read N- to C-terminus: Tryptophan synthase beta chain (389 aa).

Lysine 84 carries the post-translational modification N6-(pyridoxal phosphate)lysine.

The protein belongs to the TrpB family. As to quaternary structure, tetramer of two alpha and two beta chains. Pyridoxal 5'-phosphate is required as a cofactor.

The enzyme catalyses (1S,2R)-1-C-(indol-3-yl)glycerol 3-phosphate + L-serine = D-glyceraldehyde 3-phosphate + L-tryptophan + H2O. It participates in amino-acid biosynthesis; L-tryptophan biosynthesis; L-tryptophan from chorismate: step 5/5. The beta subunit is responsible for the synthesis of L-tryptophan from indole and L-serine. This Clostridium novyi (strain NT) protein is Tryptophan synthase beta chain.